The chain runs to 491 residues: Probable cytosol aminopeptidase (491 aa).

Residues K260 and D265 each coordinate Mn(2+). Residue K272 is part of the active site. Mn(2+)-binding residues include D284, D343, and E345. Residue R347 is part of the active site.

Belongs to the peptidase M17 family. Mn(2+) serves as cofactor.

The protein localises to the cytoplasm. The enzyme catalyses Release of an N-terminal amino acid, Xaa-|-Yaa-, in which Xaa is preferably Leu, but may be other amino acids including Pro although not Arg or Lys, and Yaa may be Pro. Amino acid amides and methyl esters are also readily hydrolyzed, but rates on arylamides are exceedingly low.. It carries out the reaction Release of an N-terminal amino acid, preferentially leucine, but not glutamic or aspartic acids.. Functionally, presumably involved in the processing and regular turnover of intracellular proteins. Catalyzes the removal of unsubstituted N-terminal amino acids from various peptides. This Rippkaea orientalis (strain PCC 8801 / RF-1) (Cyanothece sp. (strain PCC 8801)) protein is Probable cytosol aminopeptidase.